Consider the following 439-residue polypeptide: ATP-dependent RNA helicase RhlB (439 aa).

Residues 9 to 37 (QKFADLPLHPEVKQALAENGFEFCTPIQA) carry the Q motif motif. A Helicase ATP-binding domain is found at 40-219 (LPVLLQSKDI…YDHMNDPVKV (180 aa)). ATP is bound at residue 53 to 60 (AQTGTGKT). Residues 165-168 (DEAD) carry the DEAD box motif. One can recognise a Helicase C-terminal domain in the interval 243 to 390 (KMRLLLTLIE…VSNYDRDALL (148 aa)). The tract at residues 395 to 439 (SPVKIHRKHPAGARNLRERSGAGRTPGAHRSGGRPPRHDRTRRQP) is disordered. Residues 425-439 (SGGRPPRHDRTRRQP) show a composition bias toward basic residues.

It belongs to the DEAD box helicase family. RhlB subfamily. Component of the RNA degradosome, which is a multiprotein complex involved in RNA processing and mRNA degradation.

The protein localises to the cytoplasm. The catalysed reaction is ATP + H2O = ADP + phosphate + H(+). DEAD-box RNA helicase involved in RNA degradation. Has RNA-dependent ATPase activity and unwinds double-stranded RNA. The sequence is that of ATP-dependent RNA helicase RhlB from Shewanella oneidensis (strain ATCC 700550 / JCM 31522 / CIP 106686 / LMG 19005 / NCIMB 14063 / MR-1).